We begin with the raw amino-acid sequence, 325 residues long: Elongation factor P--(R)-beta-lysine ligase (325 aa).

Substrate is bound at residue 76 to 78 (SPE). ATP-binding positions include 100 to 102 (RNE) and Asn109. Tyr118 contributes to the substrate binding site. 244 to 245 (EL) provides a ligand contact to ATP. A substrate-binding site is contributed by Glu251. ATP is bound at residue Gly300.

Belongs to the class-II aminoacyl-tRNA synthetase family. EpmA subfamily. In terms of assembly, homodimer.

It catalyses the reaction D-beta-lysine + L-lysyl-[protein] + ATP = N(6)-((3R)-3,6-diaminohexanoyl)-L-lysyl-[protein] + AMP + diphosphate + H(+). Functionally, with EpmB is involved in the beta-lysylation step of the post-translational modification of translation elongation factor P (EF-P). Catalyzes the ATP-dependent activation of (R)-beta-lysine produced by EpmB, forming a lysyl-adenylate, from which the beta-lysyl moiety is then transferred to the epsilon-amino group of a conserved specific lysine residue in EF-P. The protein is Elongation factor P--(R)-beta-lysine ligase of Yersinia enterocolitica serotype O:8 / biotype 1B (strain NCTC 13174 / 8081).